A 508-amino-acid polypeptide reads, in one-letter code: Photosystem II CP47 reaction center protein (508 aa).

The next 6 helical transmembrane spans lie at 21-36, 101-115, 140-156, 203-218, 237-252, and 457-472; these read SVHI…WAGS, IVLS…IWHW, GIHL…FGAF, IAAG…FHLS, VLSS…AFVV, and SFAL…HGAR.

It belongs to the PsbB/PsbC family. PsbB subfamily. PSII is composed of 1 copy each of membrane proteins PsbA, PsbB, PsbC, PsbD, PsbE, PsbF, PsbH, PsbI, PsbJ, PsbK, PsbL, PsbM, PsbT, PsbX, PsbY, PsbZ, Psb30/Ycf12, at least 3 peripheral proteins of the oxygen-evolving complex and a large number of cofactors. It forms dimeric complexes. Binds multiple chlorophylls. PSII binds additional chlorophylls, carotenoids and specific lipids. serves as cofactor.

Its subcellular location is the plastid. The protein localises to the chloroplast thylakoid membrane. One of the components of the core complex of photosystem II (PSII). It binds chlorophyll and helps catalyze the primary light-induced photochemical processes of PSII. PSII is a light-driven water:plastoquinone oxidoreductase, using light energy to abstract electrons from H(2)O, generating O(2) and a proton gradient subsequently used for ATP formation. The chain is Photosystem II CP47 reaction center protein from Pelargonium hortorum (Common geranium).